Consider the following 391-residue polypeptide: 4-hydroxy-3-methylbut-2-en-1-yl diphosphate synthase (flavodoxin) (391 aa).

Residues Cys-286, Cys-289, Cys-321, and Glu-328 each coordinate [4Fe-4S] cluster.

The protein belongs to the IspG family. Requires [4Fe-4S] cluster as cofactor.

The enzyme catalyses (2E)-4-hydroxy-3-methylbut-2-enyl diphosphate + oxidized [flavodoxin] + H2O + 2 H(+) = 2-C-methyl-D-erythritol 2,4-cyclic diphosphate + reduced [flavodoxin]. It functions in the pathway isoprenoid biosynthesis; isopentenyl diphosphate biosynthesis via DXP pathway; isopentenyl diphosphate from 1-deoxy-D-xylulose 5-phosphate: step 5/6. In terms of biological role, converts 2C-methyl-D-erythritol 2,4-cyclodiphosphate (ME-2,4cPP) into 1-hydroxy-2-methyl-2-(E)-butenyl 4-diphosphate. This Corynebacterium diphtheriae (strain ATCC 700971 / NCTC 13129 / Biotype gravis) protein is 4-hydroxy-3-methylbut-2-en-1-yl diphosphate synthase (flavodoxin).